We begin with the raw amino-acid sequence, 302 residues long: MTQDPRRLLALRNQRWAKSRLFCLRSRRFSAFFWRRVWHDRLPVLAGHLAYVSLLSIVPLLAVVFSVLSWLPRFSYFRRQFELFMFSNFVPETEIAFRYHFSLFVKNASKTTSIGLLMLVLLALLLIAAIDENMNHIWRCRGQRKWLKTITMYSIVLGVVPLLVGGSLLLSSQIQGWALWHYELVSSLGGGLLELLPYLLSLGGILLLYKVVPNIYVRWQHALLGATLAALLFEVAKEGFGYYIAHFGTYKSIYGALAGIPILMIWLYMSWLVVLLGAEFTATLGEWQLNRTLRGRKPRLPG.

6 helical membrane-spanning segments follow: residues 51–71 (YVSL…LSWL), 111–131 (TTSI…AAID), 150–170 (ITMY…SLLL), 188–208 (LGGG…ILLL), 222–242 (ALLG…GFGY), and 256–276 (ALAG…VVLL).

This sequence belongs to the UPF0761 family.

Its subcellular location is the cell inner membrane. The chain is UPF0761 membrane protein Tola_0461 from Tolumonas auensis (strain DSM 9187 / NBRC 110442 / TA 4).